Consider the following 248-residue polypeptide: Cobalt-precorrin-6A reductase (248 aa).

It belongs to the precorrin-6x reductase family.

It carries out the reaction Co-precorrin-6B + NAD(+) = Co-precorrin-6A + NADH + H(+). It participates in cofactor biosynthesis; adenosylcobalamin biosynthesis; cob(II)yrinate a,c-diamide from sirohydrochlorin (anaerobic route): step 7/10. Catalyzes the reduction of the macrocycle of cobalt-precorrin-6A to cobalt-precorrin-6B. The protein is Cobalt-precorrin-6A reductase (cbiJ) of Methanococcus maripaludis (Methanococcus deltae).